Consider the following 136-residue polypeptide: Putative pre-16S rRNA nuclease (136 aa).

It belongs to the YqgF nuclease family.

The protein localises to the cytoplasm. Could be a nuclease involved in processing of the 5'-end of pre-16S rRNA. This Francisella tularensis subsp. tularensis (strain WY96-3418) protein is Putative pre-16S rRNA nuclease.